Here is a 429-residue protein sequence, read N- to C-terminus: Glutamate-1-semialdehyde 2,1-aminomutase 2 (429 aa).

At K268 the chain carries N6-(pyridoxal phosphate)lysine.

The protein belongs to the class-III pyridoxal-phosphate-dependent aminotransferase family. HemL subfamily. In terms of assembly, homodimer. Pyridoxal 5'-phosphate is required as a cofactor.

The protein localises to the cytoplasm. The enzyme catalyses (S)-4-amino-5-oxopentanoate = 5-aminolevulinate. The protein operates within porphyrin-containing compound metabolism; protoporphyrin-IX biosynthesis; 5-aminolevulinate from L-glutamyl-tRNA(Glu): step 2/2. The protein is Glutamate-1-semialdehyde 2,1-aminomutase 2 of Halalkalibacterium halodurans (strain ATCC BAA-125 / DSM 18197 / FERM 7344 / JCM 9153 / C-125) (Bacillus halodurans).